The sequence spans 254 residues: UPF0246 protein FTN_1542 (254 aa).

Belongs to the UPF0246 family.

The protein is UPF0246 protein FTN_1542 of Francisella tularensis subsp. novicida (strain U112).